Here is a 727-residue protein sequence, read N- to C-terminus: ATP-dependent RNA helicase Ddx1 (727 aa).

The 427-residue stretch at 2–428 folds into the Helicase ATP-binding domain; it reads TAFEEFGVLP…AERLMHFPTW (427 aa). 46–53 contacts ATP; the sequence is AETGSGKT. Positions 69-246 constitute a B30.2/SPRY domain; that stretch reads RDLEEGKAGK…MQFNFGKTDF (178 aa). The DEAD box signature appears at 370-373; that stretch reads DEAD. Residues 483–676 form the Helicase C-terminal domain; it reads TLSQAVKLLK…QVDKTMDVPV (194 aa).

The protein belongs to the DEAD box helicase family. DDX1 subfamily.

It carries out the reaction ATP + H2O = ADP + phosphate + H(+). Functionally, acts as an ATP-dependent RNA helicase, able to unwind both RNA-RNA and RNA-DNA duplexes. Possesses 5' single-stranded RNA overhang nuclease activity. The sequence is that of ATP-dependent RNA helicase Ddx1 (Ddx1) from Drosophila melanogaster (Fruit fly).